The primary structure comprises 240 residues: Ubiquinone biosynthesis O-methyltransferase (240 aa).

The S-adenosyl-L-methionine site is built by Arg44, Gly64, Asp85, and Met129.

This sequence belongs to the methyltransferase superfamily. UbiG/COQ3 family.

The enzyme catalyses a 3-demethylubiquinol + S-adenosyl-L-methionine = a ubiquinol + S-adenosyl-L-homocysteine + H(+). The catalysed reaction is a 3-(all-trans-polyprenyl)benzene-1,2-diol + S-adenosyl-L-methionine = a 2-methoxy-6-(all-trans-polyprenyl)phenol + S-adenosyl-L-homocysteine + H(+). It functions in the pathway cofactor biosynthesis; ubiquinone biosynthesis. Its function is as follows. O-methyltransferase that catalyzes the 2 O-methylation steps in the ubiquinone biosynthetic pathway. This Escherichia coli (strain UTI89 / UPEC) protein is Ubiquinone biosynthesis O-methyltransferase.